The following is a 224-amino-acid chain: Ribonuclease T (224 aa).

One can recognise an Exonuclease domain in the interval 32-206 (VVVDVETGGF…YDTEKTAELF (175 aa)). Mg(2+) is bound by residues aspartate 35, glutamate 37, histidine 193, and aspartate 198. Histidine 193 (proton donor/acceptor) is an active-site residue.

Belongs to the RNase T family. In terms of assembly, homodimer. It depends on Mg(2+) as a cofactor.

Functionally, trims short 3' overhangs of a variety of RNA species, leaving a one or two nucleotide 3' overhang. Responsible for the end-turnover of tRNA: specifically removes the terminal AMP residue from uncharged tRNA (tRNA-C-C-A). Also appears to be involved in tRNA biosynthesis. The protein is Ribonuclease T of Pseudomonas aeruginosa (strain UCBPP-PA14).